The following is a 363-amino-acid chain: Cytoplasmic tRNA 2-thiolation protein 1 (363 aa).

Residues 337 to 363 (DGDCEQQATRSERNRSSLQGKHGNFDF) form a disordered region.

The protein belongs to the TtcA family. CTU1/NCS6/ATPBD3 subfamily.

The protein resides in the cytoplasm. It functions in the pathway tRNA modification; 5-methoxycarbonylmethyl-2-thiouridine-tRNA biosynthesis. Its function is as follows. Plays a central role in 2-thiolation of mcm(5)S(2)U at tRNA wobble positions of tRNA(Lys), tRNA(Glu) and tRNA(Gln). Directly binds tRNAs and probably acts by catalyzing adenylation of tRNAs, an intermediate required for 2-thiolation. It is unclear whether it acts as a sulfurtransferase that transfers sulfur from thiocarboxylated URM1 onto the uridine of tRNAs at wobble position. This Oryza sativa subsp. japonica (Rice) protein is Cytoplasmic tRNA 2-thiolation protein 1.